The sequence spans 94 residues: Probable Fe(2+)-trafficking protein (94 aa).

This sequence belongs to the Fe(2+)-trafficking protein family.

Functionally, could be a mediator in iron transactions between iron acquisition and iron-requiring processes, such as synthesis and/or repair of Fe-S clusters in biosynthetic enzymes. This is Probable Fe(2+)-trafficking protein from Haemophilus ducreyi (strain 35000HP / ATCC 700724).